Here is a 28-residue protein sequence, read N- to C-terminus: Trypsin inhibitor 2 (28 aa).

3 disulfides stabilise this stretch: Cys3-Cys20, Cys10-Cys22, and Cys16-Cys27.

Belongs to the protease inhibitor I7 (squash-type serine protease inhibitor) family.

Its subcellular location is the secreted. Inhibits trypsin. This is Trypsin inhibitor 2 from Momordica charantia (Bitter gourd).